The following is a 524-amino-acid chain: 2,3-bisphosphoglycerate-independent phosphoglycerate mutase (524 aa).

Residues Asp-13 and Ser-63 each coordinate Mn(2+). Catalysis depends on Ser-63, which acts as the Phosphoserine intermediate. Substrate is bound by residues His-124, 154–155 (RD), Arg-186, Arg-192, 262–265 (RADR), and Lys-337. The Mn(2+) site is built by Asp-404, His-408, Asp-445, His-446, and His-464.

It belongs to the BPG-independent phosphoglycerate mutase family. Monomer. Requires Mn(2+) as cofactor.

It carries out the reaction (2R)-2-phosphoglycerate = (2R)-3-phosphoglycerate. It participates in carbohydrate degradation; glycolysis; pyruvate from D-glyceraldehyde 3-phosphate: step 3/5. Its function is as follows. Catalyzes the interconversion of 2-phosphoglycerate and 3-phosphoglycerate. In Thermomicrobium roseum (strain ATCC 27502 / DSM 5159 / P-2), this protein is 2,3-bisphosphoglycerate-independent phosphoglycerate mutase.